The primary structure comprises 373 residues: 2-aminoethylphosphonate--pyruvate transaminase (373 aa).

K191 carries the post-translational modification N6-(pyridoxal phosphate)lysine.

Belongs to the class-V pyridoxal-phosphate-dependent aminotransferase family. PhnW subfamily. In terms of assembly, homodimer. Requires pyridoxal 5'-phosphate as cofactor.

The enzyme catalyses (2-aminoethyl)phosphonate + pyruvate = phosphonoacetaldehyde + L-alanine. Functionally, involved in phosphonate degradation. This chain is 2-aminoethylphosphonate--pyruvate transaminase, found in Burkholderia ambifaria (strain MC40-6).